A 140-amino-acid polypeptide reads, in one-letter code: MDTKKFRGSRTCGGGTHKNRRGAGNRGGRGKAGGCKHHFVRAMMRGYSYGKHGFKRPDEVSRDVSIVNVGELDELASYLVEEGLAEVKDGAYHINLENLGIEKVLGSGRVTKNLVVTSEEFSASAREKIENAGGSCIDAE.

The disordered stretch occupies residues 1–32; that stretch reads MDTKKFRGSRTCGGGTHKNRRGAGNRGGRGKA.

This sequence belongs to the universal ribosomal protein uL15 family. Part of the 50S ribosomal subunit.

Functionally, binds to the 23S rRNA. This Methanosarcina acetivorans (strain ATCC 35395 / DSM 2834 / JCM 12185 / C2A) protein is Large ribosomal subunit protein uL15.